We begin with the raw amino-acid sequence, 148 residues long: F-box protein At3g55900 (148 aa).

The F-box domain maps to 9–59; that stretch reads CRNLSELPQELLYKILGLLPTRNVVSTSLISHQRRSQFHWMERLKFRYPRL.

The chain is F-box protein At3g55900 from Arabidopsis thaliana (Mouse-ear cress).